Here is a 321-residue protein sequence, read N- to C-terminus: Nacrein-like protein (321 aa).

Residues 1-319 (RGPKNWCKVH…NKNVIVYRNH (319 aa)) enclose the Alpha-carbonic anhydrase domain. The active-site Proton acceptor is histidine 58.

This sequence belongs to the alpha-carbonic anhydrase family. In terms of tissue distribution, component of the organic matrix of calcified shell layers like nacre and prisms.

The protein resides in the secreted. The protein is Nacrein-like protein of Mytilus californianus (California mussel).